The following is a 288-amino-acid chain: Glycine--tRNA ligase alpha subunit (288 aa).

The protein belongs to the class-II aminoacyl-tRNA synthetase family. Tetramer of two alpha and two beta subunits.

It is found in the cytoplasm. It catalyses the reaction tRNA(Gly) + glycine + ATP = glycyl-tRNA(Gly) + AMP + diphosphate. This chain is Glycine--tRNA ligase alpha subunit, found in Rickettsia peacockii (strain Rustic).